The sequence spans 310 residues: Homoserine kinase (310 aa).

91-101 provides a ligand contact to ATP; it reads PIGSGLGSSAC.

This sequence belongs to the GHMP kinase family. Homoserine kinase subfamily.

The protein localises to the cytoplasm. The catalysed reaction is L-homoserine + ATP = O-phospho-L-homoserine + ADP + H(+). It participates in amino-acid biosynthesis; L-threonine biosynthesis; L-threonine from L-aspartate: step 4/5. Functionally, catalyzes the ATP-dependent phosphorylation of L-homoserine to L-homoserine phosphate. This chain is Homoserine kinase, found in Escherichia coli (strain K12 / MC4100 / BW2952).